Here is a 32-residue protein sequence, read N- to C-terminus: Cytochrome b6-f complex subunit 7 (32 aa).

Residues alanine 9–leucine 27 form a helical membrane-spanning segment.

This sequence belongs to the PetM family. In terms of assembly, the 4 large subunits of the cytochrome b6-f complex are cytochrome b6, subunit IV (17 kDa polypeptide, PetD), cytochrome f and the Rieske protein, while the 4 small subunits are PetG, PetL, PetM and PetN. The complex functions as a dimer.

The protein localises to the cellular thylakoid membrane. In terms of biological role, component of the cytochrome b6-f complex, which mediates electron transfer between photosystem II (PSII) and photosystem I (PSI), cyclic electron flow around PSI, and state transitions. This is Cytochrome b6-f complex subunit 7 from Synechococcus sp. (strain RCC307).